The sequence spans 636 residues: Chaperone protein DnaK (636 aa).

The segment at 579-636 is disordered; the sequence is ELYKNAAPPPGADGQQGADGQQGADGQQGADGQQGADGQQGADGQTTESSSNDETKTN. A compositionally biased stretch (low complexity) spans 590-623; that stretch reads ADGQQGADGQQGADGQQGADGQQGADGQQGADGQ.

The protein belongs to the heat shock protein 70 family.

Functionally, acts as a chaperone. The sequence is that of Chaperone protein DnaK from Nitrosopumilus maritimus (strain SCM1).